Consider the following 334-residue polypeptide: Malate dehydrogenase (334 aa).

Position 16 to 22 (16 to 22) interacts with NAD(+); that stretch reads GAAGQIA. Arg-97 and Arg-103 together coordinate substrate. NAD(+) is bound by residues Asn-110, Gln-117, and 134–136; that span reads VGN. Substrate contacts are provided by Asn-136 and Arg-167. His-192 acts as the Proton acceptor in catalysis.

The protein belongs to the LDH/MDH superfamily. MDH type 2 family.

It carries out the reaction (S)-malate + NAD(+) = oxaloacetate + NADH + H(+). Its function is as follows. Catalyzes the reversible oxidation of malate to oxaloacetate. In Nocardia farcinica (strain IFM 10152), this protein is Malate dehydrogenase.